Consider the following 231-residue polypeptide: Uracil phosphoribosyltransferase (231 aa).

38–42 is a binding site for GTP; it reads KGLVR. 5-phospho-alpha-D-ribose 1-diphosphate is bound by residues Arg-87, Arg-112, and 140-148; that span reads DPMIATGST. Uracil-binding positions include Ile-203 and 208–210; that span reads GDA. Position 209 (Asp-209) interacts with 5-phospho-alpha-D-ribose 1-diphosphate.

It belongs to the UPRTase family. The cofactor is Mg(2+).

The enzyme catalyses UMP + diphosphate = 5-phospho-alpha-D-ribose 1-diphosphate + uracil. Its pathway is pyrimidine metabolism; UMP biosynthesis via salvage pathway; UMP from uracil: step 1/1. With respect to regulation, allosterically activated by GTP. Functionally, catalyzes the conversion of uracil and 5-phospho-alpha-D-ribose 1-diphosphate (PRPP) to UMP and diphosphate. This chain is Uracil phosphoribosyltransferase, found in Methanococcus maripaludis (strain DSM 14266 / JCM 13030 / NBRC 101832 / S2 / LL).